The chain runs to 99 residues: DNA-directed RNA polymerase subunit omega (99 aa).

It belongs to the RNA polymerase subunit omega family. In terms of assembly, the RNAP catalytic core consists of 2 alpha, 1 beta, 1 beta' and 1 omega subunit. When a sigma factor is associated with the core the holoenzyme is formed, which can initiate transcription.

It catalyses the reaction RNA(n) + a ribonucleoside 5'-triphosphate = RNA(n+1) + diphosphate. In terms of biological role, promotes RNA polymerase assembly. Latches the N- and C-terminal regions of the beta' subunit thereby facilitating its interaction with the beta and alpha subunits. The sequence is that of DNA-directed RNA polymerase subunit omega from Deinococcus geothermalis (strain DSM 11300 / CIP 105573 / AG-3a).